The primary structure comprises 399 residues: Succinate--CoA ligase [ADP-forming] subunit beta (399 aa).

Residues 9–254 enclose the ATP-grasp domain; that stretch reads KELLAKYGVG…ETEEDPAEIE (246 aa). Residues lysine 46, 53-55, valine 112, and glutamate 117 each bind ATP; that span reads GRG. Positions 209 and 223 each coordinate Mg(2+). Residues asparagine 274 and 331-333 each bind substrate; that span reads GIM.

Belongs to the succinate/malate CoA ligase beta subunit family. In terms of assembly, heterotetramer of two alpha and two beta subunits. It depends on Mg(2+) as a cofactor.

The enzyme catalyses succinate + ATP + CoA = succinyl-CoA + ADP + phosphate. It catalyses the reaction GTP + succinate + CoA = succinyl-CoA + GDP + phosphate. The protein operates within carbohydrate metabolism; tricarboxylic acid cycle; succinate from succinyl-CoA (ligase route): step 1/1. Functionally, succinyl-CoA synthetase functions in the citric acid cycle (TCA), coupling the hydrolysis of succinyl-CoA to the synthesis of either ATP or GTP and thus represents the only step of substrate-level phosphorylation in the TCA. The beta subunit provides nucleotide specificity of the enzyme and binds the substrate succinate, while the binding sites for coenzyme A and phosphate are found in the alpha subunit. This is Succinate--CoA ligase [ADP-forming] subunit beta from Novosphingobium aromaticivorans (strain ATCC 700278 / DSM 12444 / CCUG 56034 / CIP 105152 / NBRC 16084 / F199).